Consider the following 284-residue polypeptide: Homeobox protein SIX1 (284 aa).

Residues 124 to 183 (GEETSYCFKEKSRGVLREWYAHNPYPSPREKRELAEATGLTTTQVSNWFKNRRQRDRAAE) constitute a DNA-binding region (homeobox). The interval 168–269 (VSNWFKNRRQ…LQTHQHQLQD (102 aa)) is disordered. The span at 179-190 (DRAAEAKERENT) shows a compositional bias: basic and acidic residues. A compositionally biased stretch (polar residues) spans 242–269 (RSSNYSLPGLTASQPSHGLQTHQHQLQD).

Belongs to the SIX/Sine oculis homeobox family. Interacts with DACH1. Interacts with EYA1. Interacts with EYA2. Interacts with CDH1. Interacts with TBX18. Interacts with CEBPA. Interacts with CEBPB. Interacts with EBF2. Phosphorylated during interphase; becomes hyperphosphorylated during mitosis. Hyperphosphorylation impairs binding to promoter elements. In terms of processing, ubiquitinated by the anaphase promoting complex (APC), leading to its proteasomal degradation. In terms of tissue distribution, specifically expressed in skeletal muscle.

It localises to the nucleus. The protein resides in the cytoplasm. Transcription factor that is involved in the regulation of cell proliferation, apoptosis and embryonic development. Plays an important role in the development of several organs, including kidney, muscle and inner ear. Depending on context, functions as a transcriptional repressor or activator. Lacks an activation domain, and requires interaction with EYA family members for transcription activation. Mediates nuclear translocation of EYA1 and EYA2. Binds the 5'-TCA[AG][AG]TTNC-3' motif present in the MEF3 element in the MYOG promoter and CIDEA enhancer. Regulates the expression of numerous genes, including MYC, CCND1 and EZR. Acts as an activator of the IGFBP5 promoter, probably coactivated by EYA2. Repression of precursor cell proliferation in myoblasts is switched to activation through recruitment of EYA3 to the SIX1-DACH1 complex. During myogenesis, seems to act together with EYA2 and DACH2. Regulates the expression of CCNA1. Promotes brown adipocyte differentiation. This is Homeobox protein SIX1 (SIX1) from Homo sapiens (Human).